Reading from the N-terminus, the 639-residue chain is Sodium-dependent phosphate transport protein 2A (639 aa).

The Cytoplasmic segment spans residues 1 to 103; that stretch reads MISYGENLGG…LRRAGVTLLK (103 aa). Residues serine 14 and serine 34 each carry the phosphoserine modification. A helical membrane pass occupies residues 104–125; the sequence is VPLMLSFLYLFVCSLDVLSSAF. Topologically, residues 126 to 145 are extracellular; it reads QLAGGKVAGDIFKDNAILSN. The helical transmembrane segment at 146–163 threads the bilayer; sequence PVAGLVVGILVTVLVQSS. At 164 to 165 the chain is on the cytoplasmic side; that stretch reads ST. A helical membrane pass occupies residues 166–185; that stretch reads STSIVVSMVSSGLLEVSSAI. Residues 186–347 are Extracellular-facing; it reads PIIMGSNIGT…HIFVDTGLPD (162 aa). 2 disulfides stabilise this stretch: cysteine 225/cysteine 522 and cysteine 306/cysteine 336. N-linked (GlcNAc...) asparagine glycans are attached at residues asparagine 298, asparagine 323, and asparagine 330. A helical transmembrane segment spans residues 348–370; that stretch reads LAVGLILLAGSLALLCTCLILLV. At 371 to 412 the chain is on the cytoplasmic side; it reads KMLNSLLKGQVAKVIQKVINTDFPTPFTWATGYFAMVVGASM. Residues 413–436 traverse the membrane as a helical segment; sequence TFVVQSSSVFTSAITPLIGLGVIS. The Extracellular segment spans residues 437–466; that stretch reads IERAYPLTLGSNIGTTTTAILAALASPREK. Residues 467 to 487 form a helical membrane-spanning segment; sequence LSSAFQIALCHFFFNISGILL. Over 488 to 513 the chain is Cytoplasmic; the sequence is WYPVPCTRLPIRMAKALGKRTAKYRW. Threonine 508 is subject to Phosphothreonine; by PKC. Residues 514–534 traverse the membrane as a helical segment; sequence FAVLYLLLCFLLLPSMVFGLS. The Extracellular segment spans residues 535-539; sequence MAGWR. A helical transmembrane segment spans residues 540 to 561; it reads AMVGVGAPFGALLAFVVLVSAL. At 562 to 639 the chain is on the cytoplasmic side; that stretch reads QHRSPGCLPK…MPHHHDATRL (78 aa). Serine 607 is modified (phosphoserine). Threonine 623 is modified (phosphothreonine). Residue serine 625 is modified to Phosphoserine.

Belongs to the SLC34A transporter family. As to quaternary structure, interacts via its C-terminal region with NHERF4. Interacts with NHERF1. Interacts with TMEM174; regulates SLC34A1 internalization by PTH and FGF23.

It is found in the apical cell membrane. It localises to the cell membrane. It carries out the reaction 3 Na(+)(out) + phosphate(out) = 3 Na(+)(in) + phosphate(in). In terms of biological role, involved in actively transporting phosphate into cells via Na(+) cotransport in the renal brush border membrane. The cotransport has a Na(+):Pi stoichiometry of 3:1 and is electrogenic. The polypeptide is Sodium-dependent phosphate transport protein 2A (Ovis aries (Sheep)).